The sequence spans 121 residues: MYIKAALLIVVLFGVASQITSALYLKQADFDDPRMFTSSFGKRSAIESEPQAYPKSYRAIRIQRRSMDDLDDPRLMTMSFGKRMILPSLADLHRYTMYDKRGSDIDDPRYFLFSNRLTCRC.

A signal peptide spans methionine 1 to alanine 22.

May regulate lifespan in response to food availability and oxidative stress. The polypeptide is Neuropeptide-like protein 7 (Caenorhabditis elegans).